Reading from the N-terminus, the 271-residue chain is Oligodendrocyte transcription factor 1 (271 aa).

The interval 38–117 is disordered; sequence YRQPPSSSSS…RKINSRERKR (80 aa). The span at 43–61 shows a compositional bias: low complexity; that stretch reads SSSSSSTSSTSSTSSSSTT. The bHLH domain occupies 105–164; sequence QLRRKINSRERKRMQDLNLAMDALREVILPYSAAHCQGAPGRKLSKIATLLLARNYILLL.

In terms of tissue distribution, expressed in the brain, in oligodendrocytes. Strongly expressed in oligodendrogliomas, while expression is weak to moderate in astrocytomas. Expression in glioblastomas is highly variable.

It localises to the nucleus. Functionally, promotes formation and maturation of oligodendrocytes, especially within the brain. Cooperates with OLIG2 to establish the pMN domain of the embryonic neural tube. This Homo sapiens (Human) protein is Oligodendrocyte transcription factor 1 (OLIG1).